We begin with the raw amino-acid sequence, 205 residues long: Putative 3-methyladenine DNA glycosylase (205 aa).

It belongs to the DNA glycosylase MPG family.

The polypeptide is Putative 3-methyladenine DNA glycosylase (Clostridium perfringens (strain 13 / Type A)).